We begin with the raw amino-acid sequence, 1442 residues long: Chitin synthase regulator SKT5 (1442 aa).

Disordered stretches follow at residues 1 to 54 and 72 to 117; these read MTHP…SPTL and LALK…RHLQ. Basic and acidic residues predominate over residues 12–25; it reads NGKEPEKEEPRCVH. Residues 39-53 are compositionally biased toward polar residues; the sequence is KSSSAITNENVSSPT. The segment covering 75 to 99 has biased composition (basic and acidic residues); sequence KEPENGKNKHPDSEQDDGDMKEQRS. 7 Sel1-like repeats span residues 198 to 236, 237 to 272, 273 to 309, 313 to 350, 351 to 387, 388 to 425, and 426 to 461; these read VESQ…KRGH, PDAA…SRKH, PGAQ…ENAT, PHAL…EMGY, APSA…QQNH, KEAC…EQGL, and AKAE…EHGD. A disordered region spans residues 550–1402; sequence EKPKTATPTS…FSTPDSSSSK (853 aa). A compositionally biased stretch (pro residues) spans 605–617; it reads PKPPTPPPPPPPE. Basic residues predominate over residues 633 to 648; that stretch reads FKSRLLRLGKMGKIRK. Residues 747–758 show a composition bias toward low complexity; that stretch reads GPSSAAGADGAP. Composition is skewed to basic and acidic residues over residues 762–804, 821–840, and 859–875; these read GEPK…KSEK, GSDK…KPSD, and RPDE…KDSE. Over residues 876 to 891 the composition is skewed to low complexity; that stretch reads STSPSSPKPTTGSAEP. 3 stretches are compositionally biased toward pro residues: residues 964–977, 1139–1158, and 1200–1220; these read PFPP…PPNA, RPGP…PSRP, and AMQP…PTGP. The segment covering 1232–1243 has biased composition (polar residues); it reads PSQSSMHQSGNG. Over residues 1271–1282 the composition is skewed to pro residues; it reads PRPPRPTSPPPF. Residues 1295–1305 show a composition bias toward low complexity; it reads RGVMPPGSGPS. Composition is skewed to pro residues over residues 1306-1322 and 1371-1386; these read MRPP…PRSP and DRPP…PPKT. The segment covering 1392 to 1402 has biased composition (polar residues); that stretch reads GFSTPDSSSSK.

Belongs to the SKT5 family.

It localises to the cell membrane. Its function is as follows. Activator of the chitin synthase CHS3 which polymerizes chitin, a structural polymer of the fungal cell wall. The chain is Chitin synthase regulator SKT5 from Malassezia restricta (strain ATCC 96810 / NBRC 103918 / CBS 7877) (Seborrheic dermatitis infection agent).